The chain runs to 509 residues: Coiled-coil domain-containing protein 181 (509 aa).

Residues 58-82 are compositionally biased toward basic and acidic residues; it reads VIEHTKQHSDPDKSLQDEVSPRKND. Disordered stretches follow at residues 58 to 120, 241 to 332, and 345 to 367; these read VIEH…EEED, PINN…VTST, and QLEQKREKLKREEERRKIEEEKE. 2 stretches are compositionally biased toward polar residues: residues 243–266 and 300–332; these read NNANTTENDPQQLLPRSSNSSVSG and TCPSSAVISDQSKGNGNSNHRAQSAHISPVTST. Positions 335 to 375 form a coiled coil; the sequence is LSPRQKELQKQLEQKREKLKREEERRKIEEEKEKKRENDIV.

Belongs to the CCDC181 family. As to quaternary structure, homodimer. Interacts with HOOK1. Interacts with HOOK2. Interacts with HOOK3.

Its subcellular location is the cytoplasm. The protein resides in the cytoskeleton. The protein localises to the cell projection. It is found in the cilium. It localises to the flagellum. In terms of biological role, microtubule-binding protein that localizes to the microtubular manchette of elongating spermatids. This chain is Coiled-coil domain-containing protein 181, found in Pongo abelii (Sumatran orangutan).